Reading from the N-terminus, the 394-residue chain is MIRKERAILALEDGTVYRGYAFGHRGETVGEVVFNTSMTGYQEIMTDPSYNGQIVTITYPHVGNYGVAIYDMESNKPYVRGFIAREFSGEYSNHRAQQSLEAFMQQYGVVSIQGIDTRALVRRLRTGGVVKGVIAHRSYTHPEDPYGEFTPAEEQIYVQRARDHQDIDGHDMTKEVTTPLPYAFPTLRHGKRVVLMDFGIKHTIIERLAEVGIEPIVVPAHTTPAQIMALQPHGLFLSNGPGDPAPLEYAHKTAWELMGLLPTFGICLGHQILGLAAGGQTFKMKFGHRGGNQPVKNLLTGNVEITSQNHGYAVDIASIPDGAFVATHVNLNDGTLEGMAHSRYPVFSVQYHPEASPGPHDSRYLFDRFIEEIDAFEGANGSPVLKASAGRLGV.

A CPSase region spans residues 1–188 (MIRKERAILA…PLPYAFPTLR (188 aa)). L-glutamine-binding residues include serine 49, glycine 240, and glycine 242. A Glutamine amidotransferase type-1 domain is found at 192 to 379 (RVVLMDFGIK…IEEIDAFEGA (188 aa)). The active-site Nucleophile is the cysteine 267. L-glutamine is bound by residues leucine 268, glutamine 271, asparagine 309, glycine 311, and tyrosine 312. Active-site residues include histidine 352 and glutamate 354.

It belongs to the CarA family. In terms of assembly, composed of two chains; the small (or glutamine) chain promotes the hydrolysis of glutamine to ammonia, which is used by the large (or ammonia) chain to synthesize carbamoyl phosphate. Tetramer of heterodimers (alpha,beta)4.

It carries out the reaction hydrogencarbonate + L-glutamine + 2 ATP + H2O = carbamoyl phosphate + L-glutamate + 2 ADP + phosphate + 2 H(+). The catalysed reaction is L-glutamine + H2O = L-glutamate + NH4(+). It functions in the pathway amino-acid biosynthesis; L-arginine biosynthesis; carbamoyl phosphate from bicarbonate: step 1/1. Its pathway is pyrimidine metabolism; UMP biosynthesis via de novo pathway; (S)-dihydroorotate from bicarbonate: step 1/3. Its function is as follows. Small subunit of the glutamine-dependent carbamoyl phosphate synthetase (CPSase). CPSase catalyzes the formation of carbamoyl phosphate from the ammonia moiety of glutamine, carbonate, and phosphate donated by ATP, constituting the first step of 2 biosynthetic pathways, one leading to arginine and/or urea and the other to pyrimidine nucleotides. The small subunit (glutamine amidotransferase) binds and cleaves glutamine to supply the large subunit with the substrate ammonia. This chain is Carbamoyl phosphate synthase small chain, found in Deinococcus geothermalis (strain DSM 11300 / CIP 105573 / AG-3a).